Here is a 365-residue protein sequence, read N- to C-terminus: Probable tRNA pseudouridine synthase B (365 aa).

D43 (nucleophile) is an active-site residue. Positions 209-285 (YPKIVVKRSA…DHIFLEADDG (77 aa)) constitute a PUA domain. The segment at 300–365 (SGSGLHKDIQ…GKERHGRDHQ (66 aa)) is disordered. 3 stretches are compositionally biased toward basic and acidic residues: residues 304 to 318 (LHKD…KDTR), 326 to 336 (TGPEKTADRVW), and 354 to 365 (GGGKERHGRDHQ).

This sequence belongs to the pseudouridine synthase TruB family. Type 2 subfamily.

The enzyme catalyses uridine(55) in tRNA = pseudouridine(55) in tRNA. Could be responsible for synthesis of pseudouridine from uracil-55 in the psi GC loop of transfer RNAs. The sequence is that of Probable tRNA pseudouridine synthase B from Thermoplasma acidophilum (strain ATCC 25905 / DSM 1728 / JCM 9062 / NBRC 15155 / AMRC-C165).